Here is a 67-residue protein sequence, read N- to C-terminus: Vespin (67 aa).

Residues 1–21 (MHPIIWELSHMVDLQAAAQKL) form the signal peptide.

In terms of tissue distribution, expressed by the venom gland.

It localises to the secreted. In terms of biological role, shows contractile activity on isolated ileum smooth muscle. In Vespa magnifica (Hornet), this protein is Vespin.